We begin with the raw amino-acid sequence, 226 residues long: Ribose-5-phosphate isomerase A (226 aa).

Residues 28–31, 83–86, and 97–100 contribute to the substrate site; these read TGST, DGAD, and KGGG. The active-site Proton acceptor is the glutamate 106. Residue lysine 124 coordinates substrate.

The protein belongs to the ribose 5-phosphate isomerase family. As to quaternary structure, homotetramer.

The enzyme catalyses aldehydo-D-ribose 5-phosphate = D-ribulose 5-phosphate. It participates in carbohydrate biosynthesis; D-ribose 5-phosphate biosynthesis. Catalyzes the reversible conversion of ribose-5-phosphate to ribulose 5-phosphate. The sequence is that of Ribose-5-phosphate isomerase A from Methanocaldococcus jannaschii (strain ATCC 43067 / DSM 2661 / JAL-1 / JCM 10045 / NBRC 100440) (Methanococcus jannaschii).